Consider the following 150-residue polypeptide: Large ribosomal subunit protein bL9 (150 aa).

The protein belongs to the bacterial ribosomal protein bL9 family.

In terms of biological role, binds to the 23S rRNA. The chain is Large ribosomal subunit protein bL9 from Renibacterium salmoninarum (strain ATCC 33209 / DSM 20767 / JCM 11484 / NBRC 15589 / NCIMB 2235).